A 247-amino-acid chain; its full sequence is Sugar fermentation stimulation protein homolog (247 aa).

The protein belongs to the SfsA family.

This chain is Sugar fermentation stimulation protein homolog, found in Methylorubrum populi (strain ATCC BAA-705 / NCIMB 13946 / BJ001) (Methylobacterium populi).